Consider the following 232-residue polypeptide: Large ribosomal subunit protein uL1 (232 aa).

It belongs to the universal ribosomal protein uL1 family. Part of the 50S ribosomal subunit.

Binds directly to 23S rRNA. The L1 stalk is quite mobile in the ribosome, and is involved in E site tRNA release. In terms of biological role, protein L1 is also a translational repressor protein, it controls the translation of the L11 operon by binding to its mRNA. The protein is Large ribosomal subunit protein uL1 of Alkaliphilus metalliredigens (strain QYMF).